Here is a 95-residue protein sequence, read N- to C-terminus: N(2)-fixation sustaining protein CowN (95 aa).

It belongs to the CowN family.

Its function is as follows. Is required to sustain N(2)-dependent growth in the presence of low levels of carbon monoxide (CO). Probably acts by protecting the N(2) fixation ability of the nitrogenase complex, which is inactivated in the presence of CO. The protein is N(2)-fixation sustaining protein CowN of Allochromatium vinosum (strain ATCC 17899 / DSM 180 / NBRC 103801 / NCIMB 10441 / D) (Chromatium vinosum).